Consider the following 243-residue polypeptide: Thiamin pyrophosphokinase 1 (243 aa).

This sequence belongs to the thiamine pyrophosphokinase family.

It catalyses the reaction thiamine + ATP = thiamine diphosphate + AMP + H(+). Its pathway is cofactor biosynthesis; thiamine diphosphate biosynthesis; thiamine diphosphate from thiamine: step 1/1. In terms of biological role, catalyzes the phosphorylation of thiamine to thiamine pyrophosphate. Functions cell non-autonomously. The polypeptide is Thiamin pyrophosphokinase 1 (Caenorhabditis elegans).